The chain runs to 178 residues: Large ribosomal subunit protein bL17 (178 aa).

Residues 126-139 (DRARRVAASKKAEE) show a composition bias toward basic and acidic residues. The disordered stretch occupies residues 126–178 (DRARRVAASKKAEEQAPAAEAEEQAPAAEAEAPAADAAAEAKADEAAEDKKDA). The span at 140–163 (QAPAAEAEEQAPAAEAEAPAADAA) shows a compositional bias: low complexity. The segment covering 164 to 178 (AEAKADEAAEDKKDA) has biased composition (basic and acidic residues).

It belongs to the bacterial ribosomal protein bL17 family. In terms of assembly, part of the 50S ribosomal subunit. Contacts protein L32.

The sequence is that of Large ribosomal subunit protein bL17 from Nocardia farcinica (strain IFM 10152).